A 274-amino-acid polypeptide reads, in one-letter code: Rhamnulose-1-phosphate aldolase (274 aa).

Residue glutamate 117 is part of the active site. 3 residues coordinate Zn(2+): histidine 141, histidine 143, and histidine 212.

This sequence belongs to the aldolase class II family. RhaD subfamily. Homotetramer. Zn(2+) serves as cofactor.

It is found in the cytoplasm. It catalyses the reaction L-rhamnulose 1-phosphate = (S)-lactaldehyde + dihydroxyacetone phosphate. It functions in the pathway carbohydrate degradation; L-rhamnose degradation; glycerone phosphate from L-rhamnose: step 3/3. In terms of biological role, catalyzes the reversible cleavage of L-rhamnulose-1-phosphate to dihydroxyacetone phosphate (DHAP) and L-lactaldehyde. The sequence is that of Rhamnulose-1-phosphate aldolase from Pectobacterium carotovorum subsp. carotovorum (strain PC1).